A 70-amino-acid chain; its full sequence is Large ribosomal subunit protein bL31 (70 aa).

Positions 16, 18, 37, and 40 each coordinate Zn(2+).

This sequence belongs to the bacterial ribosomal protein bL31 family. Type A subfamily. As to quaternary structure, part of the 50S ribosomal subunit. The cofactor is Zn(2+).

Functionally, binds the 23S rRNA. The chain is Large ribosomal subunit protein bL31 from Shewanella baltica (strain OS223).